Here is a 182-residue protein sequence, read N- to C-terminus: Dipetalodipin (182 aa).

The N-terminal stretch at 1–18 (MKTIIAAIFLGILMHAFA) is a signal peptide. 3 disulfide bridges follow: Cys21-Cys134, Cys55-Cys181, and Cys87-Cys103.

It belongs to the calycin superfamily. Triabin family. In terms of tissue distribution, expressed in salivary glands.

It is found in the secreted. Inhibits platelet aggregation, vasoconstriction, and angiogenesis through binding to distinct eicosanoids involved in inflammation (acts as a scavenger), and has a role in inhibiting host innate immunity by impairing platelet-assisted formation of neutrophil extracellular traps (NETs). Inhibits platelet aggregation by collagen (IC(50)=30 nM), thromboxane A2 mimetic (TXA2 mimetic), or arachidonic acid (AA) without affecting aggregation induced by ADP, convulxin (GP6 agonist), PMA, and ristocetin (vWF-dependent platelet agglutinator). Binds with high affinity to TXA2, TXB2, prostaglandine H2 mimetic (PGH2 mimetic), PGD2, PGJ2, and PGF2alpha. Also interacts with 15(S)-hydroxyeicosatetraenoic acid (HETE), being the first calycin/lipocalin described to date to bind to a derivative of 15-lipoxygenase. Binding is not observed to other prostaglandins, leukotrienes, HETEs, lipids, and biogenic amines. It prevents contraction of rat uterus stimulated by PGF2alpha and induces relaxation of aorta previously contracted with TXA2 mimetic. In addition, it inhibits angiogenesis mediated by 15(S)-HETE and does not enhance inhibition of collagen-induced platelet aggregation by SQ29548 (TXA2 antagonist) and indomethacin. Also impairs platelet-assisted formation of neutrophil extracellular traps (NETs). NETs are web-like structures of DNA and proteins that play an important role in killing of pathogens. In addition, NETs are implicated in thrombus formation. In vivo, this protein exhibits antithrombotic activity in two distinct mice models that are highly dependent on platelets. It is noteworthy that it inhibits thrombosis without promoting excessive bleeding. The sequence is that of Dipetalodipin from Dipetalogaster maximus (Blood-sucking bug).